The primary structure comprises 102 residues: Small ribosomal subunit protein uS10 (102 aa).

This sequence belongs to the universal ribosomal protein uS10 family. Part of the 30S ribosomal subunit.

Involved in the binding of tRNA to the ribosomes. The polypeptide is Small ribosomal subunit protein uS10 (Pyrococcus horikoshii (strain ATCC 700860 / DSM 12428 / JCM 9974 / NBRC 100139 / OT-3)).